A 456-amino-acid chain; its full sequence is RuvB-like helicase 1 (456 aa).

70 to 77 (GPPGTGKT) provides a ligand contact to ATP.

Belongs to the RuvB family. As to quaternary structure, forms homohexameric rings. May form a dodecamer with rept made of two stacked hexameric rings. Component of the chromatin remodeling Ino80 complex.

The protein resides in the nucleus. The catalysed reaction is ATP + H2O = ADP + phosphate + H(+). In terms of biological role, acts as a transcriptional coactivator in Wg signaling caused by altered arm signaling. Pont and rept interfere antagonistically with nuclear arm signaling function, and are required to enhance or reduce arm activity, respectively. Also an essential cofactor for the normal function of Myc; required for cellular proliferation and growth. Its function is as follows. Proposed core component of the chromatin remodeling Ino80 complex which is involved in transcriptional regulation, DNA replication and probably DNA repair. This chain is RuvB-like helicase 1, found in Drosophila pseudoobscura pseudoobscura (Fruit fly).